A 269-amino-acid polypeptide reads, in one-letter code: Energy-coupling factor transporter ATP-binding protein EcfA1 (269 aa).

The ABC transporter domain occupies 8-242; sequence IVFKNVSFQY…AEELTTIGLD (235 aa). An ATP-binding site is contributed by 42–49; it reads GHNGSGKS.

It belongs to the ABC transporter superfamily. Energy-coupling factor EcfA family. Forms a stable energy-coupling factor (ECF) transporter complex composed of 2 membrane-embedded substrate-binding proteins (S component), 2 ATP-binding proteins (A component) and 2 transmembrane proteins (T component).

Its subcellular location is the cell membrane. In terms of biological role, ATP-binding (A) component of a common energy-coupling factor (ECF) ABC-transporter complex. Unlike classic ABC transporters this ECF transporter provides the energy necessary to transport a number of different substrates. The sequence is that of Energy-coupling factor transporter ATP-binding protein EcfA1 from Staphylococcus aureus (strain MSSA476).